The chain runs to 572 residues: Fatty acid amide hydrolase 1 (572 aa).

Positions 1–14 (MIFYLVLLVLGAIA) are cleaved as a signal peptide. Residues 32–63 (IVAQRRRDDLSKNVEQARKAADKLDTQRRDWI) are a coiled coil. Catalysis depends on charge relay system residues Lys139 and Ser214. Residues Ser214 and 235-238 (VGGS) each bind substrate. Ser238 serves as the catalytic Acyl-ester intermediate.

The protein belongs to the amidase family. As to expression, expressed in the pharynx, some pharyngeal neurons, the posterior intestine and anal depressor muscles.

It catalyses the reaction N-(5Z,8Z,11Z,14Z-eicosatetraenoyl)-ethanolamine + H2O = ethanolamine + (5Z,8Z,11Z,14Z)-eicosatetraenoate. It carries out the reaction (9Z)-octadecenamide + H2O = (9Z)-octadecenoate + NH4(+). The catalysed reaction is (5Z,8Z,11Z,14Z,17Z-eicosapentaenoyl) ethanolamine + H2O = (5Z,8Z,11Z,14Z,17Z)-eicosapentaenoate + ethanolamine. The enzyme catalyses N-(9Z-hexadecenoyl) ethanolamine + H2O = (9Z)-hexadecenoate + ethanolamine. It catalyses the reaction N-(9Z-octadecenoyl) ethanolamine + H2O = ethanolamine + (9Z)-octadecenoate. It carries out the reaction N-octadecanoyl ethanolamine + H2O = octadecanoate + ethanolamine. The catalysed reaction is N-docosanoyl-ethanolamine + H2O = docosanoate + ethanolamine. The enzyme catalyses N-(15Z-tetracosenoyl)-ethanolamine + H2O = (15Z)-tetracosenoate + ethanolamine. It catalyses the reaction N-hexadecanoylethanolamine + H2O = ethanolamine + hexadecanoate. It carries out the reaction N-(9Z,12Z-octadecadienoyl)-ethanolamine + H2O = ethanolamine + (9Z,12Z)-octadecadienoate. The catalysed reaction is (9Z)-octadecenoate + glycine = N-(9Z-octadecenoyl)glycine + H2O. The enzyme catalyses N-(5Z,8Z,11Z,14Z)-eicosatetraenoyl-glycine + H2O = (5Z,8Z,11Z,14Z)-eicosatetraenoate + glycine. It catalyses the reaction N-(5Z,8Z,11Z,14Z-eicosatetraenoyl)-L-serine + H2O = (5Z,8Z,11Z,14Z)-eicosatetraenoate + L-serine. Catalyzes the hydrolysis of endogenous amidated lipids like anandamide (AEA or N-(5Z,8Z,11Z,14Z-eicosatetraenoyl)-ethanolamine) and eicosapentaneoyl ethanolamide (EPEA or (5Z,8Z,11Z,14Z,17Z-eicosapentaenoyl) ethanolamine), as well as other fatty amides, to their corresponding fatty acids, thereby regulating the signaling functions of these molecules. EPEA promotes dauer formation and may constitute a signal of high nutrient availability. Breakdown of EPEA may promote lifespan extension when nutrient availability is high. Facilitates axon regeneration after injury by degradating inhibitory compounds such as AEA. FAAH cooperates with PM20D1 in the hydrolysis of amino acid-conjugated fatty acids such as N-fatty acyl glycine and N-fatty acyl-L-serine, thereby acting as a physiological regulator of specific subsets of intracellular, but not of extracellular, N-fatty acyl amino acids. The sequence is that of Fatty acid amide hydrolase 1 from Caenorhabditis elegans.